Consider the following 125-residue polypeptide: MEQDYLTIDETINIINLNTVNLTQYIDSKTLLIFDNNILLESKFISLQEIFNLLDFILFDIIDFLVKSVLPKIPIVNYNYRITGNKAYERFVDLDTNKILSPTFDIEIVDSIDKIIDFSKIFQHS.

This is an uncharacterized protein from Acanthamoeba polyphaga (Amoeba).